Here is a 132-residue protein sequence, read N- to C-terminus: Ribonuclease P protein component 2 (132 aa).

The protein belongs to the eukaryotic/archaeal RNase P protein component 2 family. In terms of assembly, consists of a catalytic RNA component and at least 4-5 protein subunits.

Its subcellular location is the cytoplasm. It carries out the reaction Endonucleolytic cleavage of RNA, removing 5'-extranucleotides from tRNA precursor.. Functionally, part of ribonuclease P, a protein complex that generates mature tRNA molecules by cleaving their 5'-ends. This Methanosarcina acetivorans (strain ATCC 35395 / DSM 2834 / JCM 12185 / C2A) protein is Ribonuclease P protein component 2.